The following is a 142-amino-acid chain: MIIGLGSDLMDIRRIEKSIERFGDRFIQRVFTEIEQAKSDKRRMRAASYAKRFAAKEAGAKALGTGIARGVSWKEIGVVNLPSGKPTLEFKGRALERALALTPHGHEPFAHITITDDHPWAQAFVVLEARPIGHHFDGLAHG.

Mg(2+) contacts are provided by Asp8 and Glu57.

This sequence belongs to the P-Pant transferase superfamily. AcpS family. Mg(2+) serves as cofactor.

Its subcellular location is the cytoplasm. It carries out the reaction apo-[ACP] + CoA = holo-[ACP] + adenosine 3',5'-bisphosphate + H(+). Its function is as follows. Transfers the 4'-phosphopantetheine moiety from coenzyme A to a Ser of acyl-carrier-protein. The protein is Holo-[acyl-carrier-protein] synthase of Maricaulis maris (strain MCS10) (Caulobacter maris).